Consider the following 545-residue polypeptide: Oligopeptide-binding protein OppA (545 aa).

A signal peptide spans 1-20; the sequence is MKKRWSIVTLMLIFTLVLSA. Cysteine 21 carries N-palmitoyl cysteine lipidation. Cysteine 21 carries the S-diacylglycerol cysteine lipid modification. Threonine 470 is modified (phosphothreonine).

This sequence belongs to the bacterial solute-binding protein 5 family. In terms of assembly, the complex is composed of two ATP-binding proteins (OppD and OppF), two transmembrane proteins (OppB and OppC) and a solute-binding protein (OppA). OppA interacts with FloT in detergent-resistant membranes (DRM). Colocalizes rarely with FloT membrane assemblies.

Its subcellular location is the cell membrane. The protein resides in the membrane raft. Its function is as follows. Part of the ABC transporter complex OppABCDF involved in the uptake of oligopeptides. Plays an important nutritional role. Binds peptides containing up to five amino acids residues regardless of their sequence, with highest affinity for tetra- and pentapeptides. Binds to the sporulation-promoting peptide PhrE (Ser-Arg-Asn-Val-Thr). Required for sporulation and genetic competence. This Bacillus subtilis (strain 168) protein is Oligopeptide-binding protein OppA.